We begin with the raw amino-acid sequence, 492 residues long: Bifunctional purine biosynthesis protein PurH (492 aa).

In terms of domain architecture, MGS-like spans 1–144 (MKKAILSVSN…KNYKHVTTIV (144 aa)).

Belongs to the PurH family.

The enzyme catalyses (6R)-10-formyltetrahydrofolate + 5-amino-1-(5-phospho-beta-D-ribosyl)imidazole-4-carboxamide = 5-formamido-1-(5-phospho-D-ribosyl)imidazole-4-carboxamide + (6S)-5,6,7,8-tetrahydrofolate. The catalysed reaction is IMP + H2O = 5-formamido-1-(5-phospho-D-ribosyl)imidazole-4-carboxamide. It functions in the pathway purine metabolism; IMP biosynthesis via de novo pathway; 5-formamido-1-(5-phospho-D-ribosyl)imidazole-4-carboxamide from 5-amino-1-(5-phospho-D-ribosyl)imidazole-4-carboxamide (10-formyl THF route): step 1/1. Its pathway is purine metabolism; IMP biosynthesis via de novo pathway; IMP from 5-formamido-1-(5-phospho-D-ribosyl)imidazole-4-carboxamide: step 1/1. This is Bifunctional purine biosynthesis protein PurH from Staphylococcus aureus (strain Newman).